The primary structure comprises 252 residues: Imidazole glycerol phosphate synthase subunit HisF (252 aa).

Residues aspartate 11 and aspartate 130 contribute to the active site.

This sequence belongs to the HisA/HisF family. As to quaternary structure, heterodimer of HisH and HisF.

The protein localises to the cytoplasm. It carries out the reaction 5-[(5-phospho-1-deoxy-D-ribulos-1-ylimino)methylamino]-1-(5-phospho-beta-D-ribosyl)imidazole-4-carboxamide + L-glutamine = D-erythro-1-(imidazol-4-yl)glycerol 3-phosphate + 5-amino-1-(5-phospho-beta-D-ribosyl)imidazole-4-carboxamide + L-glutamate + H(+). Its pathway is amino-acid biosynthesis; L-histidine biosynthesis; L-histidine from 5-phospho-alpha-D-ribose 1-diphosphate: step 5/9. IGPS catalyzes the conversion of PRFAR and glutamine to IGP, AICAR and glutamate. The HisF subunit catalyzes the cyclization activity that produces IGP and AICAR from PRFAR using the ammonia provided by the HisH subunit. In Alkaliphilus metalliredigens (strain QYMF), this protein is Imidazole glycerol phosphate synthase subunit HisF.